We begin with the raw amino-acid sequence, 143 residues long: Ninjurin-2 (143 aa).

Residues 1–61 are Extracellular-facing; it reads MESDRETIHL…KSVLQQGPFA (61 aa). A helix alpha1 region spans residues 26–38; it reads NFYATKKSVAESM. Residues 39 to 58 form a helix alpha2 region; the sequence is LDVALFMSNAMRLKSVLQQG. The helical transmembrane segment at 62-93 threads the bilayer; it reads EYYTTLVTLIIVSLLLQVVISLLLVFIAILNL. Topologically, residues 94–97 are cytoplasmic; the sequence is NEVE. Residues 98 to 127 traverse the membrane as a helical segment; that stretch reads NQRHLNKLNNAATILVFITVVINIFITAFG. Residue Lys104 participates in cholesterol binding. The Extracellular segment spans residues 128–143; sequence AHHAASMAARTSSNPI.

Belongs to the ninjurin family. In terms of assembly, homooligomer; in response to stimuli, homooligomerizes into filaments. In contrast to NINJ1, the filament is curved toward the intracellular space, preventing its circularization on a relatively flat membrane to mediate plasma membrane rupture: curvature is caused by cholesterol-binding at the cytoplasmic leaflet.

The protein resides in the cell membrane. Its role in unclear. In contrast to NINJ1 paralog, does not mediate plasma membrane rupture (cytolysis) downstream of necroptotic and pyroptotic programmed cell death. While it is able to oligomerize and form filaments, filaments are curved toward the intracellular space, preventing circularization to mediate plasma membrane rupture. May act as a homophilic transmembrane adhesion molecule involved in nerve regeneration. Promotes axonal growth. This is Ninjurin-2 (Ninj2) from Mus musculus (Mouse).